Here is a 1313-residue protein sequence, read N- to C-terminus: Target of rapamycin complex 1 subunit mip1 (1313 aa).

The interval 1 to 35 (MNDRISEVSGSSRARRSVLSYGTTETGSDRYTENS) is disordered. Phosphoserine is present on residues S834, S837, and S882. 7 WD repeats span residues 986-1029 (TFNN…NSFK), 1033-1074 (SATT…KVEL), 1087-1126 (GDRN…CYAN), 1130-1170 (RSSN…RDSL), 1176-1216 (EHSS…SLQT), 1219-1259 (TDNS…NTFR), and 1268-1308 (PKPS…IHTD).

Belongs to the WD repeat RAPTOR family. In terms of assembly, the target of rapamycin complex 1 (TORC1) is composed of at least mip1, pop3/wat1, tco89, toc1 and tor2.

The protein resides in the cytoplasm. In terms of biological role, component of TORC1, which regulates multiple cellular processes to control cell growth in response to environmental signals. Tor2 is essential for growth. Nutrient limitation and environmental stress signals cause inactivation of TORC1. Active TORC1 positively controls cell growth and ribosome biogenesis by regulating ribosomal protein gene expression. TORC1 negatively controls G1 cell-cycle arrest, sexual development and amino acid uptake. Represses mating, meiosis and sporulation efficiency by interfering with the functions of the transcription factor ste11 and the meiosis-promoting RNA-binding protein mei2. In Schizosaccharomyces pombe (strain 972 / ATCC 24843) (Fission yeast), this protein is Target of rapamycin complex 1 subunit mip1.